The chain runs to 420 residues: ATP phosphoribosyltransferase regulatory subunit (420 aa).

Belongs to the class-II aminoacyl-tRNA synthetase family. HisZ subfamily. As to quaternary structure, heteromultimer composed of HisG and HisZ subunits.

Its subcellular location is the cytoplasm. The protein operates within amino-acid biosynthesis; L-histidine biosynthesis; L-histidine from 5-phospho-alpha-D-ribose 1-diphosphate: step 1/9. Its function is as follows. Required for the first step of histidine biosynthesis. May allow the feedback regulation of ATP phosphoribosyltransferase activity by histidine. This is ATP phosphoribosyltransferase regulatory subunit from Bacillus cereus (strain AH187).